The chain runs to 891 residues: Aconitate hydratase A (891 aa).

[4Fe-4S] cluster contacts are provided by Cys-435, Cys-501, and Cys-504.

This sequence belongs to the aconitase/IPM isomerase family. Monomer. Requires [4Fe-4S] cluster as cofactor.

It carries out the reaction citrate = D-threo-isocitrate. The catalysed reaction is (2S,3R)-3-hydroxybutane-1,2,3-tricarboxylate = 2-methyl-cis-aconitate + H2O. The protein operates within carbohydrate metabolism; tricarboxylic acid cycle; isocitrate from oxaloacetate: step 2/2. It functions in the pathway organic acid metabolism; propanoate degradation. Its function is as follows. Involved in the catabolism of short chain fatty acids (SCFA) via the tricarboxylic acid (TCA)(acetyl degradation route) and probably the 2-methylcitrate cycle I (propionate degradation route). Catalyzes the reversible isomerization of citrate to isocitrate via cis-aconitate. The apo form of AcnA functions as a RNA-binding regulatory protein. Could catalyze the hydration of 2-methyl-cis-aconitate to yield (2R,3S)-2-methylisocitrate. This Legionella pneumophila subsp. pneumophila (strain Philadelphia 1 / ATCC 33152 / DSM 7513) protein is Aconitate hydratase A (acn).